A 413-amino-acid chain; its full sequence is Probable protein phosphatase 2C 78 (413 aa).

Residues K21–R40 are disordered. The 299-residue stretch at K111 to L409 folds into the PPM-type phosphatase domain. The Mn(2+) site is built by D153, G154, D327, and D400.

This sequence belongs to the PP2C family. Requires Mg(2+) as cofactor. The cofactor is Mn(2+).

The protein localises to the golgi apparatus. It localises to the nucleus. It carries out the reaction O-phospho-L-seryl-[protein] + H2O = L-seryl-[protein] + phosphate. It catalyses the reaction O-phospho-L-threonyl-[protein] + H2O = L-threonyl-[protein] + phosphate. Acts as a negative regulator of abscisic acid (ABA) signaling for stomatal closure in leaves, and controls water loss during leaf senescence. Activated by the NAC029/NAP transcription factor during ABA signaling in senescing leaves. Functions as a negative regulator of osmotic stress and ABA signaling. Acts as a negative regulator of response to drought. The protein is Probable protein phosphatase 2C 78 of Arabidopsis thaliana (Mouse-ear cress).